The sequence spans 425 residues: L-lysine N6-monooxygenase (425 aa).

Position 8 to 14 (8 to 14 (IGVGTGP)) interacts with FAD.

Belongs to the lysine N(6)-hydroxylase/L-ornithine N(5)-oxygenase family. FAD is required as a cofactor.

It is found in the cytoplasm. The protein resides in the cell membrane. The enzyme catalyses L-lysine + NADPH + O2 = N(6)-hydroxy-L-lysine + NADP(+) + H2O. The protein operates within siderophore biosynthesis; aerobactin biosynthesis. In terms of biological role, flavoprotein monooxygenase required for N-hydroxylation of lysine. Involved in the biosynthesis of the siderophore aerobactin which is a chelator that mediates the high-affinity iron transport systems induced by the organism under iron-stressed conditions. The sequence is that of L-lysine N6-monooxygenase from Escherichia coli.